Consider the following 379-residue polypeptide: Pectin lyase A (379 aa).

A signal peptide spans 1-20 (MKYSTIFSAAAAVFAGSAAA). 2 cysteine pairs are disulfide-bonded: cysteine 83-cysteine 102 and cysteine 92-cysteine 226. Threonine 88 carries an O-linked (Man) threonine glycan. Asparagine 129 carries N-linked (GlcNAc...) asparagine glycosylation. Residue arginine 256 is part of the active site. Cysteine 322 and cysteine 330 are oxidised to a cystine. An O-linked (Man) serine; in strain 4M-147 glycan is attached at serine 368.

It belongs to the polysaccharide lyase 1 family. N-glycosylated at Asn-129 and O-glycosylated at Thr-88 when expressed in Aspergillus nidulans. The protein from strain 4M-147 is O-glycosylated at Thr-88 and Ser-368. PubMed:9195887 modeled GalNAc at the O-glycosylation site, a glycosylation not observed in fungi. The O-linked saccharide is probably mannose.

Its subcellular location is the secreted. The catalysed reaction is Eliminative cleavage of (1-&gt;4)-alpha-D-galacturonan methyl ester to give oligosaccharides with 4-deoxy-6-O-methyl-alpha-D-galact-4-enuronosyl groups at their non-reducing ends.. Pectinolytic enzymes consist of four classes of enzymes: pectin lyase, polygalacturonase, pectin methylesterase and rhamnogalacturonase. Among pectinolytic enzymes, pectin lyase is the most important in depolymerization of pectin, since it cleaves internal glycosidic bonds of highly methylated pectins. The sequence is that of Pectin lyase A (pelA) from Aspergillus niger.